Here is a 77-residue protein sequence, read N- to C-terminus: uncharacterized protein (77 aa).

Basic and acidic residues-rich tracts occupy residues 1–24 (CPVA…EDQR) and 37–58 (EGPK…ERGP). The disordered stretch occupies residues 1-77 (CPVAEEHFLV…RHGPKRKPAK (77 aa)). Residues 66-77 (RPRHGPKRKPAK) are compositionally biased toward basic residues.

This is an uncharacterized protein from Macaca fascicularis (Crab-eating macaque).